A 475-amino-acid polypeptide reads, in one-letter code: 7-dehydrocholesterol reductase (475 aa).

Positions 1 to 21 (MAAKSQPNIPKAKSLDGVTND) are disordered. S14 carries the phosphoserine modification. Helical transmembrane passes span 40–60 (LASV…FIMA), 154–174 (THLL…TIIF), 177–197 (WIPL…FAMV), 266–286 (VTNA…DFFW), 306–326 (LGWG…LYLV), and 331–351 (QLST…YYIF). Residues K358, R362, L395, W400, and 407 to 408 (NY) contribute to the NADP(+) site. A helical membrane pass occupies residues 420 to 440 (LACGGGHLLPYFYIIYMAILL). NADP(+)-binding positions include D447, 451–455 (CASKY), and Y462.

The protein belongs to the ERG4/ERG24 family. As to quaternary structure, interacts with DHCR24; this interaction regulates DHCR7 activity. Interacts with TMEM147. Widely expressed. Most abundant in adrenal gland, liver, testis, and brain.

Its subcellular location is the endoplasmic reticulum membrane. The catalysed reaction is cholesterol + NADP(+) = 7-dehydrocholesterol + NADPH + H(+). The enzyme catalyses 7-dehydrodesmosterol + NADPH + H(+) = desmosterol + NADP(+). It catalyses the reaction 5,6alpha-epoxy-5alpha-cholestan-3beta-ol + H2O = 5alpha-cholestane-3beta,5,6beta-triol. It carries out the reaction 5,6beta-epoxy-5beta-cholestan-3beta-ol + H2O = 5alpha-cholestane-3beta,5,6beta-triol. It functions in the pathway steroid biosynthesis; cholesterol biosynthesis. 7-DHC reductase and cholesterol-5,6-epoxide hydrolase (ChEH) activities are inhibited by tamoxifen and the selective AEBS ligand (4-benzyl-phenoxy)-ethyl-N-pyrrolidine (PBPE). ChEH activity is inhibited by oleic acid. Oxidoreductase that catalyzes the last step of the cholesterol synthesis pathway, which transforms cholesta-5,7-dien-3beta-ol (7-dehydrocholesterol,7-DHC) into cholesterol by reducing the C7-C8 double bond of its sterol core. Can also metabolize cholesta-5,7,24-trien-3beta-ol (7-dehydrodemosterol, 7-DHD) to desmosterol, which is then metabolized by the Delta(24)-sterol reductase (DHCR24) to cholesterol. Modulates ferroptosis (a form of regulated cell death driven by iron-dependent lipid peroxidation) through the metabolic breakdown of the anti-ferroptotic metabolites 7-DHC and 7-DHD which, when accumulated, divert the propagation of peroxyl radical-mediated damage from phospholipid components to its sterol core, protecting plasma and mitochondrial membranes from phospholipid autoxidation. In terms of biological role, component of the microsomal antiestrogen binding site (AEBS), a multiproteic complex at the ER membrane that consists of an association between cholestenol Delta-isomerase/EBP and DHCR7. This complex is responsible for cholesterol-5,6-epoxide hydrolase (ChEH) activity, which consists in the hydration of cholesterol-5,6-epoxides (5,6-EC) into cholestane-3beta,5alpha,6beta-triol (CT). The precise role of each component of this complex has not been described yet. The sequence is that of 7-dehydrocholesterol reductase from Homo sapiens (Human).